Here is a 490-residue protein sequence, read N- to C-terminus: Cobyric acid synthase (490 aa).

One can recognise a GATase cobBQ-type domain in the interval 250–432; sequence QLEIVVIRLP…LHGLLDNHAW (183 aa). Cys-328 serves as the catalytic Nucleophile. The active site involves His-424.

Belongs to the CobB/CobQ family. CobQ subfamily.

It functions in the pathway cofactor biosynthesis; adenosylcobalamin biosynthesis. In terms of biological role, catalyzes amidations at positions B, D, E, and G on adenosylcobyrinic A,C-diamide. NH(2) groups are provided by glutamine, and one molecule of ATP is hydrogenolyzed for each amidation. This Gloeobacter violaceus (strain ATCC 29082 / PCC 7421) protein is Cobyric acid synthase.